Here is a 360-residue protein sequence, read N- to C-terminus: Peptide chain release factor 1 (360 aa).

N5-methylglutamine is present on Gln237.

It belongs to the prokaryotic/mitochondrial release factor family. Post-translationally, methylated by PrmC. Methylation increases the termination efficiency of RF1.

It is found in the cytoplasm. In terms of biological role, peptide chain release factor 1 directs the termination of translation in response to the peptide chain termination codons UAG and UAA. The polypeptide is Peptide chain release factor 1 (Pseudomonas fluorescens (strain ATCC BAA-477 / NRRL B-23932 / Pf-5)).